A 431-amino-acid chain; its full sequence is Glutamate-1-semialdehyde 2,1-aminomutase (431 aa).

An N6-(pyridoxal phosphate)lysine modification is found at Lys269.

It belongs to the class-III pyridoxal-phosphate-dependent aminotransferase family. HemL subfamily. As to quaternary structure, homodimer. The cofactor is pyridoxal 5'-phosphate.

It is found in the cytoplasm. It catalyses the reaction (S)-4-amino-5-oxopentanoate = 5-aminolevulinate. It functions in the pathway porphyrin-containing compound metabolism; protoporphyrin-IX biosynthesis; 5-aminolevulinate from L-glutamyl-tRNA(Glu): step 2/2. The protein is Glutamate-1-semialdehyde 2,1-aminomutase of Francisella tularensis subsp. holarctica (strain FTNF002-00 / FTA).